Reading from the N-terminus, the 170-residue chain is ATP synthase subunit b (170 aa).

The chain crosses the membrane as a helical span at residues 22–44 (IINLAVVVFGLYKFLPGFLGKIL).

Belongs to the ATPase B chain family. F-type ATPases have 2 components, F(1) - the catalytic core - and F(0) - the membrane proton channel. F(1) has five subunits: alpha(3), beta(3), gamma(1), delta(1), epsilon(1). F(0) has four main subunits: a(1), b(1), b'(1) and c(10-14). The alpha and beta chains form an alternating ring which encloses part of the gamma chain. F(1) is attached to F(0) by a central stalk formed by the gamma and epsilon chains, while a peripheral stalk is formed by the delta, b and b' chains.

Its subcellular location is the cellular thylakoid membrane. In terms of biological role, f(1)F(0) ATP synthase produces ATP from ADP in the presence of a proton or sodium gradient. F-type ATPases consist of two structural domains, F(1) containing the extramembraneous catalytic core and F(0) containing the membrane proton channel, linked together by a central stalk and a peripheral stalk. During catalysis, ATP synthesis in the catalytic domain of F(1) is coupled via a rotary mechanism of the central stalk subunits to proton translocation. Component of the F(0) channel, it forms part of the peripheral stalk, linking F(1) to F(0). The chain is ATP synthase subunit b from Prochlorococcus marinus (strain NATL1A).